A 259-amino-acid chain; its full sequence is Ribonuclease PH (259 aa).

Phosphate-binding positions include Arg-88 and 126-128; that span reads GTR.

This sequence belongs to the RNase PH family. In terms of assembly, homohexameric ring arranged as a trimer of dimers.

The enzyme catalyses tRNA(n+1) + phosphate = tRNA(n) + a ribonucleoside 5'-diphosphate. Phosphorolytic 3'-5' exoribonuclease that plays an important role in tRNA 3'-end maturation. Removes nucleotide residues following the 3'-CCA terminus of tRNAs; can also add nucleotides to the ends of RNA molecules by using nucleoside diphosphates as substrates, but this may not be physiologically important. Probably plays a role in initiation of 16S rRNA degradation (leading to ribosome degradation) during starvation. This is Ribonuclease PH from Mycobacterium ulcerans (strain Agy99).